We begin with the raw amino-acid sequence, 235 residues long: Small ribosomal subunit protein uS2 (235 aa).

This sequence belongs to the universal ribosomal protein uS2 family.

This is Small ribosomal subunit protein uS2 from Thermoanaerobacter pseudethanolicus (strain ATCC 33223 / 39E) (Clostridium thermohydrosulfuricum).